The sequence spans 165 residues: UPF0254 protein MMP0935 (165 aa).

Belongs to the UPF0254 family.

This chain is UPF0254 protein MMP0935, found in Methanococcus maripaludis (strain DSM 14266 / JCM 13030 / NBRC 101832 / S2 / LL).